The following is a 270-amino-acid chain: uncharacterized protein (270 aa).

A signal peptide spans 1 to 23; the sequence is MFNFITFILFAVVCISYCHKSRG. N-linked (GlcNAc...) asparagine glycans are attached at residues Asn246 and Asn252.

It localises to the secreted. This is an uncharacterized protein from Caenorhabditis elegans.